Reading from the N-terminus, the 199-residue chain is MAFELPNLPYATDALEPHIDKQTMEIHHDKHHNTYVTKLNSAVEGTDLESKSIEEIVANLDSVPEDIQTAVRNNGGGHLNHSLFWELLTPNSEEKGTVVDKIKEQWGSLDEFKKEFADKAAARFGSGWAWLVVNNGQLEIVTTPNQDNPLTEGKTPILGLDVWEHAYYLKYQNKRPDYISAFWNVVNWEKVDELYNATK.

Residues His-27, His-81, Asp-161, and His-165 each contribute to the Fe(3+) site. Residues His-27, His-81, Asp-161, and His-165 each coordinate Mn(2+).

Belongs to the iron/manganese superoxide dismutase family. In terms of assembly, homodimer. Requires Mn(2+) as cofactor. It depends on Fe(3+) as a cofactor.

The enzyme catalyses 2 superoxide + 2 H(+) = H2O2 + O2. Its function is as follows. Destroys superoxide anion radicals which are normally produced within the cells and which are toxic to biological systems. Catalyzes the dismutation of superoxide anion radicals into O2 and H2O2 by successive reduction and oxidation of the transition metal ion at the active site. This chain is Superoxide dismutase [Mn/Fe] (sodA), found in Staphylococcus haemolyticus (strain JCSC1435).